Consider the following 389-residue polypeptide: (S)-8-oxocitronellyl enol synthase CYC1 (389 aa).

NADP(+) contacts are provided by residues Thr-34–Ile-36, Arg-62–Arg-63, Asp-80–Val-81, Ala-104–Trp-105, and Gln-138. Residues Lys-142 and Tyr-174 contribute to the active site. 2 residues coordinate substrate: Lys-142 and Tyr-174. Residues Tyr-174, Val-201, and Ser-208–Met-210 contribute to the NADP(+) site. Residue Ser-350 participates in substrate binding.

Belongs to the short-chain dehydrogenases/reductases (SDR) family. Highly divergent.

It catalyses the reaction (S)-8-oxocitronellyl enol + NADP(+) = (6E)-8-oxogeranial + NADPH + H(+). It carries out the reaction (S)-8-oxocitronellyl enol + NAD(+) = (6E)-8-oxogeranial + NADH + H(+). Functionally, iridoid synthase that catalyzes the first step in generation of the iridoid ring scaffold using the linear monoterpene (6E)-8-oxogeranial as substrate. Iridoids comprise a large family of distinctive bicyclic monoterpenes that possess a wide range of pharmacological activities, including anticancer, anti-inflammatory, antifungal and antibacterial activities. The sequence is that of (S)-8-oxocitronellyl enol synthase CYC1 from Camptotheca acuminata (Happy tree).